A 574-amino-acid chain; its full sequence is MCPRAARAPATLLLALGAVLWPAAGAWELTILHTNDVHSRLEQTSEDSSKCVNASRCMGGVARLFTKVQQIRRAEPNVLLLDAGDQYQGTIWFTVYKGAEVAHFMNALRYDAMALGNHEFDNGVEGLIEPLLKEAKFPILSANIKAKGPLASQISGLYLPYKVLPVGDEVVGIVGYTSKETPFLSNPGTNLVFEDEITALQPEVDKLKTLNVNKIIALGHSGFEMDKLIAQKVRGVDVVVGGHSNTFLYTGNPPSKEVPAGKYPFIVTSDDGRKVPVVQAYAFGKYLGYLKIEFDERGNVISSHGNPILLNSSIPEDPSIKADINKWRIKLDNYSTQELGKTIVYLDGSSQSCRFRECNMGNLICDAMINNNLRHTDEMFWNHVSMCILNGGGIRSPIDERNNGTITWENLAAVLPFGGTFDLVQLKGSTLKKAFEHSVHRYGQSTGEFLQVGGIHVVYDLSRKPGDRVVKLDVLCTKCRVPSYDPLKMDEVYKVILPNFLANGGDGFQMIKDELLRHDSGDQDINVVSTYISKMKVIYPAVEGRIKFSTGSHCHGSFSLIFLSLWAVIFVLYQ.

The N-terminal stretch at 1-26 (MCPRAARAPATLLLALGAVLWPAAGA) is a signal peptide. Zn(2+) contacts are provided by aspartate 36 and histidine 38. Cysteines 51 and 57 form a disulfide. An N-linked (GlcNAc...) asparagine glycan is attached at asparagine 53. Zn(2+)-binding residues include aspartate 85, asparagine 117, histidine 220, and histidine 243. 2 N-linked (GlcNAc...) asparagine glycosylation sites follow: asparagine 311 and asparagine 333. Disulfide bonds link cysteine 353-cysteine 358 and cysteine 365-cysteine 387. Residue arginine 354 participates in AMP binding. Position 354 (arginine 354) interacts with IMP. AMP is bound by residues asparagine 390 and arginine 395. Asparagine 390 and arginine 395 together coordinate IMP. An N-linked (GlcNAc...) asparagine glycan is attached at asparagine 403. Residue phenylalanine 417 participates in AMP binding. An IMP-binding site is contributed by phenylalanine 417. Cysteine 476 and cysteine 479 are joined by a disulfide. AMP contacts are provided by phenylalanine 500 and aspartate 506. The IMP site is built by phenylalanine 500 and aspartate 506. Serine 549 is lipidated: GPI-anchor amidated serine. Residues 550–574 (TGSHCHGSFSLIFLSLWAVIFVLYQ) constitute a propeptide, removed in mature form.

It belongs to the 5'-nucleotidase family. Homodimer. Requires Zn(2+) as cofactor.

The protein localises to the cell membrane. The catalysed reaction is a ribonucleoside 5'-phosphate + H2O = a ribonucleoside + phosphate. The enzyme catalyses a 2'-deoxyribonucleoside 5'-phosphate + H2O = a 2'-deoxyribonucleoside + phosphate. It carries out the reaction dTMP + H2O = thymidine + phosphate. It catalyses the reaction CMP + H2O = cytidine + phosphate. The catalysed reaction is IMP + H2O = inosine + phosphate. The enzyme catalyses AMP + H2O = adenosine + phosphate. It carries out the reaction GMP + H2O = guanosine + phosphate. It catalyses the reaction UMP + H2O = uridine + phosphate. The catalysed reaction is dAMP + H2O = 2'-deoxyadenosine + phosphate. The enzyme catalyses dCMP + H2O = 2'-deoxycytidine + phosphate. With respect to regulation, inhibited by adenosine 5'-(alpha,beta-methylene)-diphosphate (AMPCP). Functionally, catalyzes the hydrolysis of nucleotide monophosphates, releasing inorganic phosphate and the corresponding nucleoside, with AMP being the preferred substrate. Shows a preference for ribonucleotide monophosphates over their equivalent deoxyribose forms. Other substrates include IMP, UMP, GMP, CMP, dAMP, dCMP, dTMP, NAD and NMN. This is 5'-nucleotidase (NT5E) from Homo sapiens (Human).